Consider the following 225-residue polypeptide: Endo-1,4-beta-xylanase (225 aa).

The first 31 residues, 1 to 31, serve as a signal peptide directing secretion; sequence MVGFTPVALAALAATGALAFPAGNATELEKR. Pyrrolidone carboxylic acid is present on glutamine 32. Residues 32-222 form the GH11 domain; the sequence is QTTPNSEGWH…SSGYARITVA (191 aa). Residue glutamate 117 is the Nucleophile of the active site. Cysteine 141 and cysteine 185 are joined by a disulfide. Glutamate 209 acts as the Proton donor in catalysis.

The catalysed reaction is Endohydrolysis of (1-&gt;4)-beta-D-xylosidic linkages in xylans.. Its pathway is glycan degradation; xylan degradation. The sequence is that of Endo-1,4-beta-xylanase (XYNA) from Thermomyces lanuginosus (Humicola lanuginosa).